Here is a 200-residue protein sequence, read N- to C-terminus: Putative manganese exporter (200 aa).

6 helical membrane passes run 13-33, 53-73, 81-101, 110-130, 150-170, and 180-200; these read TEHVMSVLAISITTVALAEIG, IIAAIFLATLANHALAAWLGV, PDILKWVLVVSFLTMAGWILI, SISTRGPFVASFIAFFMAEIG, WVIVGTTLGMLLANVPVVLIG, and GLIRKVTAGLFLLMALATAFF.

This sequence belongs to the GDT1 family.

Its subcellular location is the cell inner membrane. Its function is as follows. Involved in manganese homeostasis. May function as a manganese exporter. In Vibrio cholerae serotype O1 (strain ATCC 39541 / Classical Ogawa 395 / O395), this protein is Putative manganese exporter.